Reading from the N-terminus, the 488-residue chain is Retinoic acid receptor RXR-alpha (488 aa).

The interval 1–160 (MSSAAMDTKH…GAMASFTKHI (160 aa)) is modulating. A Glycyl lysine isopeptide (Lys-Gly) (interchain with G-Cter in SUMO) cross-link involves residue Lys-134. A DNA-binding region (nuclear receptor) is located at residues 158 to 233 (KHICAICGDR…MGMKREAVQE (76 aa)). Positions 161, 164, 178, and 181 each coordinate Zn(2+). Residues 161 to 181 (CAICGDRSSGKHYGVYSCEGC) form an NR C4-type zinc finger. Positions 186–191 (KRTVRK) are nuclear localization signal. Zn(2+) contacts are provided by Cys-197, Cys-203, Cys-213, and Cys-216. The NR C4-type zinc finger occupies 197 to 216 (CRDSKDCMIDKRQRNRCQYC). The interval 227–250 (KREAVQEERQRGKERNENEVESSN) is hinge. Residues 232 to 244 (QEERQRGKERNEN) show a composition bias toward basic and acidic residues. Positions 232–256 (QEERQRGKERNENEVESSNSANEDM) are disordered. An NR LBD domain is found at 253–484 (NEDMPVEKIL…TFLMEMLEAP (232 aa)). 2 residues coordinate 9-cis-retinoate: Arg-342 and Ala-353. All-trans-retinoate is bound by residues Arg-342 and Ala-353. The tract at residues 374 to 394 (RVLTELVSKMRDMQMDKTELG) is required for nuclear export. Residues 473 to 484 (IDTFLMEMLEAP) are AF-2.

It belongs to the nuclear hormone receptor family. NR2 subfamily. In terms of assembly, homodimer. Heterodimer; with a rar molecule. Binds DNA preferentially as a rar/rxr heterodimer. Interacts with coactivator ncoa3 and with senp6. In terms of processing, sumoylated on Lys-134; which negatively regulates transcriptional activity. Desumoylated specifically by SENP6.

The protein resides in the nucleus. In terms of biological role, receptor for retinoic acid that acts as a transcription factor. Forms homo- or heterodimers with retinoic acid receptors (rars) and binds to target response elements in response to their ligands, all-trans or 9-cis retinoic acid, to regulate gene expression in various biological processes. The rar/rxr heterodimers bind to the retinoic acid response elements (RARE) composed of tandem 5'-AGGTCA-3' sites known as DR1-DR5 to regulate transcription. The high affinity ligand for rxrs is 9-cis retinoic acid. In the absence of ligand, the rar/rxr heterodimers associate with a multiprotein complex containing transcription corepressors that induce histone deacetylation, chromatin condensation and transcriptional suppression. On ligand binding, the corepressors dissociate from the receptors and coactivators are recruited leading to transcriptional activation. The polypeptide is Retinoic acid receptor RXR-alpha (rxra) (Xenopus laevis (African clawed frog)).